Here is a 112-residue protein sequence, read N- to C-terminus: MFKILLVCALAALVAANENAEVKELVNEVNPDGFKTVVSLSDGSASQASGDVHGNIDGVFEWVSPEGVHVRVAYKADENGYQPSSDLLPVAPPIPEAILKSLAWIEAHPSKE.

The signal sequence occupies residues Met-1–Ala-16. In terms of domain architecture, Chitin-binding type R&amp;R spans Pro-31–Pro-92.

Component of the larval cuticle. The polypeptide is Larval cuticle protein III/IV (Lcp3) (Drosophila miranda (Fruit fly)).